A 227-amino-acid chain; its full sequence is ATP-dependent dethiobiotin synthetase BioD (227 aa).

13 to 18 serves as a coordination point for ATP; it reads DIGKTY. Thr-17 contacts Mg(2+). Residue Lys-38 is part of the active site. Ser-42 contributes to the substrate binding site. ATP contacts are provided by residues Asp-55, 116–119, and 179–180; these read EGSG and NN. 2 residues coordinate Mg(2+): Asp-55 and Glu-116.

The protein belongs to the dethiobiotin synthetase family. As to quaternary structure, homodimer. Mg(2+) serves as cofactor.

It is found in the cytoplasm. The enzyme catalyses (7R,8S)-7,8-diammoniononanoate + CO2 + ATP = (4R,5S)-dethiobiotin + ADP + phosphate + 3 H(+). The protein operates within cofactor biosynthesis; biotin biosynthesis; biotin from 7,8-diaminononanoate: step 1/2. Catalyzes a mechanistically unusual reaction, the ATP-dependent insertion of CO2 between the N7 and N8 nitrogen atoms of 7,8-diaminopelargonic acid (DAPA, also called 7,8-diammoniononanoate) to form a ureido ring. In Clostridium botulinum (strain Loch Maree / Type A3), this protein is ATP-dependent dethiobiotin synthetase BioD.